The primary structure comprises 430 residues: Tapasin (430 aa).

The signal sequence occupies residues 1–15; that stretch reads MAAGLRLLLAGLCWS. Over 16–399 the chain is Lumenal; it reads QFRVEDAASP…TEGPHLEDIT (384 aa). The cysteines at positions 34 and 99 are disulfide-linked. Residues 61–128 form a disordered region; it reads GDAETPPEPG…PDARSPPTAG (68 aa). N-linked (GlcNAc...) asparagine glycosylation occurs at Asn-78. Positions 101–111 are enriched in polar residues; the sequence is LNPTNPQTGSD. 2 consecutive Ig-like C1-type domains span residues 139-273 and 278-382; these read PQYG…LQLH and PKVT…MRVS. A disulfide bridge connects residues Cys-299 and Cys-368. Residues 316–342 are disordered; the sequence is RAGGSGTSQSPRDTVMDSWTSGHRQAA. Residues 322–338 show a composition bias toward polar residues; that stretch reads TSQSPRDTVMDSWTSGH. The chain crosses the membrane as a helical span at residues 400 to 417; the sequence is GLFLVAFVLCGLIRWLYP. Residues 418–430 are Cytoplasmic-facing; it reads KAARPKEETKKSQ.

As to quaternary structure, interacts with TAP1 and is thus a subunit of the TAP complex. Interaction with TAP1 is TAP2 independent and is required for efficient peptide-TAP interaction. Obligatory mediator for the interaction between newly assembled MHC class I molecules, calreticulin, ERp57 and TAP. Up to 4 MHC class I/tapasin complexes bind to 1 TAP.

The protein resides in the endoplasmic reticulum membrane. Involved in the association of MHC class I with transporter associated with antigen processing (TAP) and in the assembly of MHC class I with peptide (peptide loading). This is Tapasin (TAPBP) from Gallus gallus (Chicken).